A 153-amino-acid chain; its full sequence is Spanin, inner membrane subunit (153 aa).

Topologically, residues 1-3 are cytoplasmic; that stretch reads MSR. A helical; Signal-anchor for type II membrane protein membrane pass occupies residues 4 to 24; it reads VTAIISALVICIIVCLSWAVN. Topologically, residues 25-153 are periplasmic; it reads HYRDNAITYK…TQKYINEQCR (129 aa). Positions 65 to 92 form a coiled coil; sequence DAKYTKELADAKAENDALRDDVAAGRRR.

The protein belongs to the Lambdavirus i-spanin family. In terms of assembly, homodimer; disulfide-linked. Interacts (via C-terminus) with the spanin outer lipoprotein subunit (via C-terminus). Part of the spanin complex which spans the entire periplasmic space. The spanin complex is composed of one homodimer of the i-spanin linked by intermolecular disulfide bonds involving two Cys residues and one homodimer of the o-spanin covalently linked by an intermolecular disulfide bond involving one Cys.

It is found in the host cell inner membrane. In terms of biological role, component of the spanin complex that disrupts the host outer membrane and participates in cell lysis during virus exit. The spanin complex conducts the final step in host lysis by disrupting the outer membrane after holin and endolysin have permeabilized the inner membrane and degraded the host peptidoglycans. Host outer membrane disruption is due to local fusion between the inner and outer membrane performed by the spanin complex. The sequence is that of Spanin, inner membrane subunit (Rz) from Escherichia phage lambda (Bacteriophage lambda).